The sequence spans 92 residues: MRLLILILLSVLVLFQHDFWFGSNGFLDYRQNAEKIKENQAENEKLSQRNQRINAEIQGLTKGFEAIEERARMQHGLVKENEVFYHIVKESK.

The Cytoplasmic segment spans residues 1-3; sequence MRL. The chain crosses the membrane as a helical span at residues 4-21; it reads LILILLSVLVLFQHDFWF. Residues 22–92 lie on the Periplasmic side of the membrane; it reads GSNGFLDYRQ…VFYHIVKESK (71 aa). The stretch at 28–63 forms a coiled coil; that stretch reads DYRQNAEKIKENQAENEKLSQRNQRINAEIQGLTKG.

Belongs to the FtsB family. In terms of assembly, part of a complex composed of FtsB, FtsL and FtsQ.

It is found in the cell inner membrane. Its function is as follows. Essential cell division protein. May link together the upstream cell division proteins, which are predominantly cytoplasmic, with the downstream cell division proteins, which are predominantly periplasmic. The chain is Cell division protein FtsB from Haemophilus influenzae (strain PittEE).